The sequence spans 281 residues: ATP phosphoribosyltransferase (281 aa).

Belongs to the ATP phosphoribosyltransferase family. Long subfamily. The cofactor is Mg(2+).

It is found in the cytoplasm. It catalyses the reaction 1-(5-phospho-beta-D-ribosyl)-ATP + diphosphate = 5-phospho-alpha-D-ribose 1-diphosphate + ATP. The protein operates within amino-acid biosynthesis; L-histidine biosynthesis; L-histidine from 5-phospho-alpha-D-ribose 1-diphosphate: step 1/9. With respect to regulation, feedback inhibited by histidine. Catalyzes the condensation of ATP and 5-phosphoribose 1-diphosphate to form N'-(5'-phosphoribosyl)-ATP (PR-ATP). Has a crucial role in the pathway because the rate of histidine biosynthesis seems to be controlled primarily by regulation of HisG enzymatic activity. The chain is ATP phosphoribosyltransferase from Corynebacterium diphtheriae (strain ATCC 700971 / NCTC 13129 / Biotype gravis).